Here is a 223-residue protein sequence, read N- to C-terminus: Sigma non-opioid intracellular receptor 1 (223 aa).

At methionine 1 to tryptophan 9 the chain is on the lumenal side. The tract at residues proline 2 to arginine 8 is targeting to endoplasmic reticulum-associated lipid droplets. Residues alanine 10–leucine 30 traverse the membrane as a helical segment. Residues glycine 31–proline 223 are Cytoplasmic-facing. An important for ligand-binding region spans residues serine 99–leucine 106. Positions valine 177–proline 223 are C-terminal hydrophobic region.

This sequence belongs to the ERG2 family. In terms of assembly, homotrimer. Interacts with KCNA2; cocaine consumption leads to increased interaction. Forms a ternary complex with ANK2 and ITPR3. The complex is disrupted by agonists. Interacts with KCNA4. Interacts with RNF112 in an oxidative stress-regulated manner. Expressed in ependymocytes and neurons throughout the CNS from the olfactory bulb to the spinal cord. Expressed by progenitor, mature and satellite oligodendrocytes and by Schwann cells (at protein level). Expressed in liver, intestine, kidney, brain, lung and heart. Expressed by retinal cells.

It localises to the nucleus inner membrane. The protein resides in the nucleus outer membrane. It is found in the nucleus envelope. The protein localises to the cytoplasmic vesicle. Its subcellular location is the endoplasmic reticulum membrane. It localises to the membrane. The protein resides in the lipid droplet. It is found in the cell junction. The protein localises to the cell membrane. Its subcellular location is the cell projection. It localises to the growth cone. The protein resides in the postsynaptic density membrane. Functionally, functions in lipid transport from the endoplasmic reticulum and is involved in a wide array of cellular functions probably through regulation of the biogenesis of lipid microdomains at the plasma membrane. Involved in the regulation of different receptors it plays a role in BDNF signaling and EGF signaling. Also regulates ion channels like the potassium channel and could modulate neurotransmitter release. Plays a role in calcium signaling through modulation together with ANK2 of the ITP3R-dependent calcium efflux at the endoplasmic reticulum. Plays a role in several other cell functions including proliferation, survival and death. Originally identified for its ability to bind various psychoactive drugs it is involved in learning processes, memory and mood alteration. Necessary for proper mitochondrial axonal transport in motor neurons, in particular the retrograde movement of mitochondria. Plays a role in protecting cells against oxidative stress-induced cell death via its interaction with RNF112. This chain is Sigma non-opioid intracellular receptor 1 (Sigmar1), found in Rattus norvegicus (Rat).